The primary structure comprises 529 residues: Bifunctional purine biosynthesis protein PurH (529 aa).

Residues 1 to 148 (MQQPRPVRRA…KNHKDVAIVV (148 aa)) enclose the MGS-like domain.

The protein belongs to the PurH family.

The enzyme catalyses (6R)-10-formyltetrahydrofolate + 5-amino-1-(5-phospho-beta-D-ribosyl)imidazole-4-carboxamide = 5-formamido-1-(5-phospho-D-ribosyl)imidazole-4-carboxamide + (6S)-5,6,7,8-tetrahydrofolate. It catalyses the reaction IMP + H2O = 5-formamido-1-(5-phospho-D-ribosyl)imidazole-4-carboxamide. It functions in the pathway purine metabolism; IMP biosynthesis via de novo pathway; 5-formamido-1-(5-phospho-D-ribosyl)imidazole-4-carboxamide from 5-amino-1-(5-phospho-D-ribosyl)imidazole-4-carboxamide (10-formyl THF route): step 1/1. It participates in purine metabolism; IMP biosynthesis via de novo pathway; IMP from 5-formamido-1-(5-phospho-D-ribosyl)imidazole-4-carboxamide: step 1/1. The chain is Bifunctional purine biosynthesis protein PurH from Cronobacter sakazakii (strain ATCC BAA-894) (Enterobacter sakazakii).